A 285-amino-acid polypeptide reads, in one-letter code: Protoheme IX farnesyltransferase (285 aa).

9 helical membrane passes run 13 to 33 (LGKLGVVSLLDLAAVAGAFLA), 40 to 60 (LLPIIPMFIGGTLASMGAMII), 89 to 109 (EAIIVGSLLAILGTALGFIDN), 110 to 130 (ILTAFFIALGVVIYIFVYTIL), 137 to 157 (LNIVIGGFAGSAAAWAGYTSL), 165 to 185 (GFLLGFLIFMWTPGHFWSLAL), 194 to 214 (AHYPMLPAVVGITTSARAIAI), 230 to 252 (INLIALIAFSILSLFLMFLSYRL), and 265 to 285 (FIFSNIYLMLILLIMIIVKLI).

It belongs to the UbiA prenyltransferase family. Protoheme IX farnesyltransferase subfamily.

The protein resides in the cell membrane. It catalyses the reaction heme b + (2E,6E)-farnesyl diphosphate + H2O = Fe(II)-heme o + diphosphate. The protein operates within porphyrin-containing compound metabolism; heme O biosynthesis; heme O from protoheme: step 1/1. In terms of biological role, converts heme B (protoheme IX) to heme O by substitution of the vinyl group on carbon 2 of heme B porphyrin ring with a hydroxyethyl farnesyl side group. The protein is Protoheme IX farnesyltransferase of Saccharolobus islandicus (strain Y.N.15.51 / Yellowstone #2) (Sulfolobus islandicus).